The following is a 610-amino-acid chain: Pentatricopeptide repeat-containing protein At3g15590, mitochondrial (610 aa).

Residues 1–71 (MYSLSRILQR…FSRFFGIHKL (71 aa)) constitute a mitochondrion transit peptide. Residues 88-142 (EELSESEEAVPVSGDVPEGVVDDDSLFEPELGSDNDDLEIEEKHSKDGGKPTKKR) are disordered. Residues 107-127 (VVDDDSLFEPELGSDNDDLEI) show a composition bias toward acidic residues. Residues 128-137 (EEKHSKDGGK) show a composition bias toward basic and acidic residues. PPR repeat units follow at residues 241-275 (GEVV…KFPT), 276-309 (SVFA…NIKP), 310-344 (SRAT…GIEL), 345-379 (DPEL…GLQQ), 380-410 (TPWV…VDQN), 412-442 (RYDN…LVEK), 447-481 (PMMP…GIAI), 482-517 (GPST…KMRP), and 518-552 (MFTT…SYAA).

Belongs to the PPR family. P subfamily.

The protein localises to the mitochondrion. This Arabidopsis thaliana (Mouse-ear cress) protein is Pentatricopeptide repeat-containing protein At3g15590, mitochondrial.